A 334-amino-acid chain; its full sequence is DNA-directed RNA polymerase subunit alpha (334 aa).

Residues 1–232 (MIREKLKVST…DLFIPFLHAE (232 aa)) are alpha N-terminal domain (alpha-NTD). An alpha C-terminal domain (alpha-CTD) region spans residues 267–334 (QKEITLKSIF…NILQIENHFV (68 aa)).

It belongs to the RNA polymerase alpha chain family. In plastids the minimal PEP RNA polymerase catalytic core is composed of four subunits: alpha, beta, beta', and beta''. When a (nuclear-encoded) sigma factor is associated with the core the holoenzyme is formed, which can initiate transcription.

The protein resides in the plastid. It is found in the chloroplast. It carries out the reaction RNA(n) + a ribonucleoside 5'-triphosphate = RNA(n+1) + diphosphate. Functionally, DNA-dependent RNA polymerase catalyzes the transcription of DNA into RNA using the four ribonucleoside triphosphates as substrates. This chain is DNA-directed RNA polymerase subunit alpha, found in Pisum sativum (Garden pea).